The chain runs to 188 residues: Transcription factor E (188 aa).

The region spanning 9-98 is the HTH TFE/IIEalpha-type domain; that stretch reads DLEVLRDVTL…SWRLNLREVL (90 aa).

Belongs to the TFE family. In terms of assembly, monomer. Interaction with RNA polymerase subunits RpoF and RpoE is necessary for Tfe stimulatory transcription activity. Able to interact with Tbp and RNA polymerase in the absence of DNA promoter. Interacts both with the preinitiation and elongation complexes.

Functionally, transcription factor that plays a role in the activation of archaeal genes transcribed by RNA polymerase. Facilitates transcription initiation by enhancing TATA-box recognition by TATA-box-binding protein (Tbp), and transcription factor B (Tfb) and RNA polymerase recruitment. Not absolutely required for transcription in vitro, but particularly important in cases where Tbp or Tfb function is not optimal. It dynamically alters the nucleic acid-binding properties of RNA polymerases by stabilizing the initiation complex and destabilizing elongation complexes. Seems to translocate with the RNA polymerase following initiation and acts by binding to the non template strand of the transcription bubble in elongation complexes. The protein is Transcription factor E of Methanopyrus kandleri (strain AV19 / DSM 6324 / JCM 9639 / NBRC 100938).